The sequence spans 679 residues: UvrABC system protein B (679 aa).

Positions 25–412 constitute a Helicase ATP-binding domain; that stretch reads EGVNQGQRYQ…DGHLAEQVIR (388 aa). An ATP-binding site is contributed by 38–45; the sequence is GATGTGKT. Positions 91 to 114 match the Beta-hairpin motif; that stretch reads YYDYYQPEAYVPVSDTYIAKTSSI. The Helicase C-terminal domain maps to 429–591; that stretch reads QVDDLLAEIR…IVPRPAGKRA (163 aa). The UVR domain occupies 639–674; the sequence is PELIDQLETKMKEAAKNLNFEEAASLRDRIKKFRQK.

This sequence belongs to the UvrB family. As to quaternary structure, forms a heterotetramer with UvrA during the search for lesions. Interacts with UvrC in an incision complex.

Its subcellular location is the cytoplasm. Functionally, the UvrABC repair system catalyzes the recognition and processing of DNA lesions. A damage recognition complex composed of 2 UvrA and 2 UvrB subunits scans DNA for abnormalities. Upon binding of the UvrA(2)B(2) complex to a putative damaged site, the DNA wraps around one UvrB monomer. DNA wrap is dependent on ATP binding by UvrB and probably causes local melting of the DNA helix, facilitating insertion of UvrB beta-hairpin between the DNA strands. Then UvrB probes one DNA strand for the presence of a lesion. If a lesion is found the UvrA subunits dissociate and the UvrB-DNA preincision complex is formed. This complex is subsequently bound by UvrC and the second UvrB is released. If no lesion is found, the DNA wraps around the other UvrB subunit that will check the other stand for damage. The protein is UvrABC system protein B of Prochlorococcus marinus (strain MIT 9313).